The following is a 280-amino-acid chain: HCLS1-associated protein X-1 (280 aa).

Ser-2 is modified (N-acetylserine). A required for localization in mitochondria region spans residues 2 to 45 (SVFDLFRGFFGFPGPRSHRDPFFGGMTRDDDDDDDDDDEAEEDR). 2 disordered regions span residues 12-70 (GFPG…SFSP) and 100-263 (TLPS…SALD). Positions 30 to 43 (DDDDDDDDDDEAEE) are enriched in acidic residues. The segment at 115–280 (TPGERLREGQ…LLLGRWFRSR (166 aa)) is involved in HCLS1 binding. Basic and acidic residues-rich tracts occupy residues 116–125 (PGERLREGQT) and 134–154 (PDSH…KPES). Residues 176 to 207 (VSPHSRAKEDKDLDSQVSQEGLGPLLQPQPKS) are involved in CASP9 binding. The interval 177–248 (SPHSRAKEDK…TTVTHQEAHD (72 aa)) is involved in GNA13 binding. Residues 184 to 280 (EDKDLDSQVS…LLLGRWFRSR (97 aa)) form a required for localization in sarcoplasmic reticulum region. Residues 185–280 (DKDLDSQVSQ…LLLGRWFRSR (96 aa)) are involved in PKD2 binding. Phosphoserine occurs at positions 190 and 193. The interval 204–226 (QPKSYFKSISVTKITKPDGTVEE) is involved in PLN binding. Positions 204–246 (QPKSYFKSISVTKITKPDGTVEERRTVVDSEGRRETTVTHQEA) are involved in ATP2A2 binding. Residues 211-280 (SISVTKITKP…LLLGRWFRSR (70 aa)) are mediates interaction with UCP3. A compositionally biased stretch (basic and acidic residues) spans 218 to 256 (TKPDGTVEERRTVVDSEGRRETTVTHQEAHDSSRSDPDS). Residues 271–280 (LLLGRWFRSR) are required for ITGB6 binding.

The protein belongs to the HAX1 family. Interacts with ABCB1, ABCB4 and ABCB11. Directly associates with HCLS1/HS1, through binding to its N-terminal region. Interacts with CTTN. Interacts with PKD2. Interacts with GNA13. Interacts with CASP9. Interacts with ITGB6. Interacts with PLN and ATP2A2; these interactions are inhibited by calcium. Interacts with GRB7. Interacts (via C-terminus) with XIAP/BIRC4 (via BIR 2 domain and BIR 3 domain) and this interaction blocks ubiquitination of XIAP/BIRC4. Interacts with TPC2. Interacts with KCNC3. Interacts with XPO1. Interacts with RNF217. Interacts with UCP3; the interaction is direct and calcium-dependent. Interacts with MAPRE2; this interaction regulates cell migration in keratinocytes. As to expression, ubiquitous, with highest levels in kidney and liver (at protein level).

It is found in the mitochondrion matrix. The protein resides in the endoplasmic reticulum. Its subcellular location is the nucleus membrane. The protein localises to the cytoplasmic vesicle. It localises to the cytoplasm. It is found in the cell cortex. The protein resides in the cell membrane. Its subcellular location is the sarcoplasmic reticulum. The protein localises to the P-body. It localises to the nucleus. Recruits the Arp2/3 complex to the cell cortex and regulates reorganization of the cortical actin cytoskeleton via its interaction with KCNC3 and the Arp2/3 complex. Slows down the rate of inactivation of KCNC3 channels. Promotes GNA13-mediated cell migration. Involved in the clathrin-mediated endocytosis pathway. May be involved in internalization of ABC transporters such as ABCB11. May inhibit CASP9 and CASP3. Promotes cell survival. May regulate intracellular calcium pools. This chain is HCLS1-associated protein X-1 (Hax1), found in Mus musculus (Mouse).